Reading from the N-terminus, the 387-residue chain is Type 2 DNA topoisomerase 6 subunit A (387 aa).

The Topo IIA-type catalytic domain maps to 12–160 (EARKKAADTL…MLILSKEKGK (149 aa)). Catalysis depends on Tyr106, which acts as the O-(5'-phospho-DNA)-tyrosine intermediate. The Mg(2+) site is built by Glu207 and Asp259.

The protein belongs to the TOP6A family. In terms of assembly, homodimer. Heterotetramer of two Top6A and two Top6B chains. Requires Mg(2+) as cofactor.

The enzyme catalyses ATP-dependent breakage, passage and rejoining of double-stranded DNA.. In terms of biological role, relaxes both positive and negative superturns and exhibits a strong decatenase activity. This chain is Type 2 DNA topoisomerase 6 subunit A, found in Sulfurisphaera tokodaii (strain DSM 16993 / JCM 10545 / NBRC 100140 / 7) (Sulfolobus tokodaii).